A 357-amino-acid chain; its full sequence is Ribosomal RNA large subunit methyltransferase M (357 aa).

Residues Ser-190, Ala-223–Gly-226, Asp-242, Asp-262, and Asp-278 contribute to the S-adenosyl-L-methionine site. The active-site Proton acceptor is Lys-307.

Belongs to the class I-like SAM-binding methyltransferase superfamily. RNA methyltransferase RlmE family. RlmM subfamily. In terms of assembly, monomer.

Its subcellular location is the cytoplasm. The enzyme catalyses cytidine(2498) in 23S rRNA + S-adenosyl-L-methionine = 2'-O-methylcytidine(2498) in 23S rRNA + S-adenosyl-L-homocysteine + H(+). Its function is as follows. Catalyzes the 2'-O-methylation at nucleotide C2498 in 23S rRNA. This is Ribosomal RNA large subunit methyltransferase M from Chromohalobacter salexigens (strain ATCC BAA-138 / DSM 3043 / CIP 106854 / NCIMB 13768 / 1H11).